Consider the following 106-residue polypeptide: Insulin-2 (106 aa).

The signal sequence occupies residues 1–23; it reads MALWMQCLPLVLVLLFSTPNTEA. 3 disulfide bridges follow: C30–C92, C42–C105, and C91–C96. A propeptide spans 56-83 (c peptide); the sequence is DIEQAQVNGPQDNELDGMQFQPQEYQKM.

It belongs to the insulin family. As to quaternary structure, heterodimer of a B chain and an A chain linked by two disulfide bonds.

The protein resides in the secreted. In terms of biological role, insulin decreases blood glucose concentration. It increases cell permeability to monosaccharides, amino acids and fatty acids. It accelerates glycolysis, the pentose phosphate cycle, and glycogen synthesis in liver. The protein is Insulin-2 (ins-b) of Xenopus laevis (African clawed frog).